We begin with the raw amino-acid sequence, 150 residues long: D-galactose-binding lectin (150 aa).

D-galactose-binding residues include histidine 16 and glycine 19. Asparagine 26 carries N-linked (GlcNAc...) asparagine glycosylation. D-galactose contacts are provided by residues 35–37, histidine 64, and glycine 67; that span reads DIH. N-linked (GlcNAc...) asparagine glycosylation is present at asparagine 74. D-galactose-binding positions include 83–85, histidine 108, and glycine 111; that span reads DRH. Asparagine 118 carries N-linked (GlcNAc...) asparagine glycosylation. A D-galactose-binding site is contributed by 127 to 129; sequence DEH.

In terms of assembly, oligomerizes in solution. The N-terminus is blocked. In terms of tissue distribution, expressed in mantle. Expressed 51 and 1.6 fold in mantle and gonads, respectively, relative to that in hemocytes. Expressed at a much lower level in other tissues tested including gill, muscle and hepatopancreas.

Hemagglutinating activity does not require Ca(2+) ions. Hemagglutinating activity is inhibited by porcine stomach mucin (PSM), bovine submaxillary mucin (BSM) and fetuin. Agglutination of V.proteolyticus bacteria is inhibited by D-galactose, but not by D-glucose. Fungal binding is inhibited by D-galactose, but not by pathogen-associated molecular patterns (PAMPs) including lipopolysaccharide (LPS), peptidoglycan and beta-glucan. In terms of biological role, D-galactose-binding lectin. Binds both alpha and beta anomer of galactose (Gal). Binds strongly to branched beta-Gal-terminated glycans and weakly to unbranched glycans with alpha-Gal on the end of chains. Has strong affinity for both Gal and GalNAc. Binds glycoproteins containing mucin-type chains. Has hemagglutinating activity towards human group A erythrocytes. Has hemagglutinating activity towards rabbit erythrocytes. Agglutinates V.proteolyticus bacteria. Binds strongly to fungi including species from genera Aspergillus, Alternaria, Fusarium and Haematonectria, and to a lesser extent to fungi from genera Trichoderma. Decreases conidia germination and hyphal growth of fungi. At high concentration, stimulates secretion of cytokines TNF-alpha and IFN-gamma from human peripheral blood cells, and at low concentration reduces hyperexpression of cytokine IL-10 in these cells, indicative of immunomodulatory capability. However, has no effect on IL-4 production. Recognizes pathogen-associated molecular patterns (PAMPs) and binds to peptidoglycan from S.aureus, but has only little binding to beta-1,3-glucan from E.gracilis and lipopolysaccharide (LPS) from E.coli. May be involved in innate immunity acting as an antibacterial or antifungal agent recognizing carbohydrate ligands on the surface of pathogens. The sequence is that of D-galactose-binding lectin from Mytilus trossulus (Blue mussel).